Here is a 500-residue protein sequence, read N- to C-terminus: MYSLQLFATEIPAMKITISKISPDFKTIVMGLFEDNETVNDGGVLQGKQVIDNIKQFSDFNGSFGEFFSTALPEEKNVIVVGLGKKDEWNENKELNIGGKIYCELSRLKIKKAAVLIEGSAANVAYGAFLRSFKFDKYKTKKDEKITEVEEITVLVKDEQLSNAERSFEHLRQEGESIFLARSFITEPPNILYPESYADHIKKELTKLGLEIEVLDKKQMEEKKMGALLGVAQGSSKEPKLVVIKWNGASKEQKPIAFVGKGITFDTGGVSLKPSRGMESMKYDMAGSATVVGVMHALAGRKAKVNAIGVVALAENAVGGNAQRPSDVVTSMSGQTIEVLNTDAEGRLILADALWYTQDRFSPKFMIDLATLTGAIVVALGNNEYAGLFSNNDELANRLIDAGNEVNEKLWRFPMNETYDKIIDSPIADVQNIAPAGSGGDSIMAAQFLQRFVNETCWAHLDIAGTAWHEKGTDICPRGAVGFGVRLLNKLVEKYYEAND.

The Mn(2+) site is built by K261 and D266. K273 is an active-site residue. Residues D284, D343, and E345 each coordinate Mn(2+). R347 is an active-site residue.

It belongs to the peptidase M17 family. The cofactor is Mn(2+).

Its subcellular location is the cytoplasm. The catalysed reaction is Release of an N-terminal amino acid, Xaa-|-Yaa-, in which Xaa is preferably Leu, but may be other amino acids including Pro although not Arg or Lys, and Yaa may be Pro. Amino acid amides and methyl esters are also readily hydrolyzed, but rates on arylamides are exceedingly low.. It catalyses the reaction Release of an N-terminal amino acid, preferentially leucine, but not glutamic or aspartic acids.. Functionally, presumably involved in the processing and regular turnover of intracellular proteins. Catalyzes the removal of unsubstituted N-terminal amino acids from various peptides. This is Probable cytosol aminopeptidase from Wolbachia pipientis wMel.